Here is a 38-residue protein sequence, read N- to C-terminus: Large ribosomal subunit protein bL36 (38 aa).

Belongs to the bacterial ribosomal protein bL36 family.

The polypeptide is Large ribosomal subunit protein bL36 (Limosilactobacillus fermentum (strain NBRC 3956 / LMG 18251) (Lactobacillus fermentum)).